The sequence spans 475 residues: Ankyrin repeat, SAM and basic leucine zipper domain-containing protein 1 (475 aa).

Residues 1 to 25 (MAAGALRGLPVAGGGESSESEDDGW) form a disordered region. Phosphoserine occurs at positions 17, 18, and 20. 6 ANK repeats span residues 45–74 (EKKE…SVDS), 78–107 (YGWT…NASF), 110–144 (DKQS…DPNV), 148–177 (RLMT…EVNT), 181–210 (NGYT…NKML), and 214–243 (DGKM…PLEG). One can recognise an SAM domain in the interval 272 to 334 (SYTAFGDLEV…KILAALKELQ (63 aa)).

As to quaternary structure, interacts with DDX4, PIWIL1, RANBP9 and TDRD1.

Its subcellular location is the cytoplasm. Plays a central role during spermatogenesis by repressing transposable elements and preventing their mobilization, which is essential for the germline integrity. Acts via the piRNA metabolic process, which mediates the repression of transposable elements during meiosis by forming complexes composed of piRNAs and Piwi proteins and governs the methylation and subsequent repression of transposons. Its association with pi-bodies suggests a participation in the primary piRNAs metabolic process. Required prior to the pachytene stage to facilitate the production of multiple types of piRNAs, including those associated with repeats involved in the regulation of retrotransposons. May act by mediating protein-protein interactions during germ cell maturation. This Pongo abelii (Sumatran orangutan) protein is Ankyrin repeat, SAM and basic leucine zipper domain-containing protein 1 (ASZ1).